Consider the following 2523-residue polypeptide: Non-reducing polyketide synthase Preu3 (2523 aa).

An N-terminal acylcarrier protein transacylase domain (SAT) region spans residues 58 to 247 (LQSLASERRA…KILAMTGSFH (190 aa)). The 420-residue stretch at 373–792 (DNAVAVVGMA…GSNGAMIVCQ (420 aa)) folds into the Ketosynthase family 3 (KS3) domain. Catalysis depends on for beta-ketoacyl synthase activity residues Cys-539, His-674, and His-715. The malonyl-CoA:ACP transacylase (MAT) domain stretch occupies residues 900–1207 (CFGGQVKAFV…KAFGSLADAT (308 aa)). Ser-986 functions as the For acyl/malonyl transferase activity in the catalytic mechanism. The interval 1271-1398 (HELLTFSSFE…GLVAFGGTVE (128 aa)) is N-terminal hotdog fold. One can recognise a PKS/mFAS DH domain in the interval 1271–1573 (HELLTFSSFE…FTRVTVPGLR (303 aa)). The segment at 1301–1568 (LVKGHAVVAQ…ALGCRFTRVT (268 aa)) is product template (PT) domain. His-1305 serves as the catalytic Proton acceptor; for dehydratase activity. The tract at residues 1421–1573 (ECDALRGSAT…FTRVTVPGLR (153 aa)) is C-terminal hotdog fold. The active-site Proton donor; for dehydratase activity is the Asp-1483. The tract at residues 1579-1601 (ANGDARAQERPSGSRISPSPLAP) is disordered. Residues 1639–1713 (VDYLAQVKAL…KLAEYLAKTL (75 aa)) form the Carrier domain. Residue Ser-1673 is modified to O-(pantetheine 4'-phosphoryl)serine. The disordered stretch occupies residues 1735 to 1757 (DAEQSSDESPYDSTDDSASGYGD). Residues 1738–1749 (QSSDESPYDSTD) show a composition bias toward acidic residues. Residues 1986 to 2085 (LEIGGGTGGT…MRQLLSSEGF (100 aa)) form a methyltransferase (CMeT) domain region. Residues 2218-2520 (LILHGGGHVL…RALEWLVEQC (303 aa)) form a thioesterase (TE) domain region.

The cofactor is pantetheine 4'-phosphate.

The catalysed reaction is 3 malonyl-CoA + acetyl-CoA + S-adenosyl-L-methionine + H(+) = 3-methylorsellinate + S-adenosyl-L-homocysteine + 3 CO2 + 4 CoA. Functionally, non-reducing polyketide synthase; part of a gene cluster that mediates the biosynthesis of a yet unidentified natural product. The first step in the pathway is performed by Preu3 that condenses one acetyl-CoA starter unit with 3 malonyl-CoA units. Preu3 also catalyzes one methylation step to produce 3-methylorsellinate, an intermediate that exhibits significant antibacterial activities against methicillin-resistant Staphylococcus aureus, multidrug-resistant Enterococcus faecalis, multidrug-resistant Enterococcus faecium, and multidrug-resistant Staphylococcus epidermidis. This chain is Non-reducing polyketide synthase Preu3, found in Preussia isomera (Coprophilous fungus).